Here is a 64-residue protein sequence, read N- to C-terminus: Copper-metallothionein (64 aa).

Ser-1 bears the N-acetylserine mark. Cu(+) contacts are provided by Cys-7, Cys-11, Cys-16, Cys-18, Cys-22, Cys-24, Cys-28, Cys-30, Cys-33, Cys-36, Cys-38, Cys-43, Cys-45, Cys-49, Cys-55, Cys-57, Cys-61, and Cys-63.

It belongs to the metallothionein superfamily. Type 2 family.

In terms of biological role, the metallothioneins are involved in the cellular sequestration of toxic metal ions and regulation of essential trace elements. This isoform binds exclusively copper. This is Copper-metallothionein from Helix pomatia (Roman snail).